A 211-amino-acid polypeptide reads, in one-letter code: Probable GTP-binding protein EngB (211 aa).

Residues 26–200 (SGIEIAFAGR…RQKLDDWFAA (175 aa)) form the EngB-type G domain. GTP is bound by residues 34-41 (GRSNAGKS), 61-65 (GRTRL), 79-82 (DLPG), 146-149 (TKAD), and 179-181 (FSS). 2 residues coordinate Mg(2+): serine 41 and threonine 63.

The protein belongs to the TRAFAC class TrmE-Era-EngA-EngB-Septin-like GTPase superfamily. EngB GTPase family. The cofactor is Mg(2+).

In terms of biological role, necessary for normal cell division and for the maintenance of normal septation. The polypeptide is Probable GTP-binding protein EngB (Sodalis glossinidius (strain morsitans)).